The chain runs to 415 residues: Serine hydroxymethyltransferase (415 aa).

(6S)-5,6,7,8-tetrahydrofolate contacts are provided by residues L121 and G125–L127. K230 is subject to N6-(pyridoxal phosphate)lysine.

It belongs to the SHMT family. As to quaternary structure, homodimer. Pyridoxal 5'-phosphate serves as cofactor.

It is found in the cytoplasm. The enzyme catalyses (6R)-5,10-methylene-5,6,7,8-tetrahydrofolate + glycine + H2O = (6S)-5,6,7,8-tetrahydrofolate + L-serine. Its pathway is one-carbon metabolism; tetrahydrofolate interconversion. The protein operates within amino-acid biosynthesis; glycine biosynthesis; glycine from L-serine: step 1/1. Catalyzes the reversible interconversion of serine and glycine with tetrahydrofolate (THF) serving as the one-carbon carrier. This reaction serves as the major source of one-carbon groups required for the biosynthesis of purines, thymidylate, methionine, and other important biomolecules. Also exhibits THF-independent aldolase activity toward beta-hydroxyamino acids, producing glycine and aldehydes, via a retro-aldol mechanism. This is Serine hydroxymethyltransferase from Syntrophomonas wolfei subsp. wolfei (strain DSM 2245B / Goettingen).